The chain runs to 200 residues: Ribosomal RNA large subunit methyltransferase E (200 aa).

The S-adenosyl-L-methionine site is built by Gly-49, Trp-51, Asp-69, Asp-87, and Asp-111. Lys-151 acts as the Proton acceptor in catalysis.

The protein belongs to the class I-like SAM-binding methyltransferase superfamily. RNA methyltransferase RlmE family.

Its subcellular location is the cytoplasm. The catalysed reaction is uridine(2552) in 23S rRNA + S-adenosyl-L-methionine = 2'-O-methyluridine(2552) in 23S rRNA + S-adenosyl-L-homocysteine + H(+). Functionally, specifically methylates the uridine in position 2552 of 23S rRNA at the 2'-O position of the ribose in the fully assembled 50S ribosomal subunit. The protein is Ribosomal RNA large subunit methyltransferase E of Lawsonia intracellularis (strain PHE/MN1-00).